Consider the following 84-residue polypeptide: Mu-Sparatoxin-Hp1 (84 aa).

The signal sequence occupies residues 1–20 (MKIAIVMTLLLVAFSTASFA). A propeptide spanning residues 21-35 (IEPIERAALDLVMAR) is cleaved from the precursor. 3 disulfides stabilise this stretch: cysteine 54-cysteine 68, cysteine 61-cysteine 73, and cysteine 67-cysteine 78. Leucine amide is present on leucine 82.

In terms of tissue distribution, expressed by the venom gland.

The protein localises to the secreted. Functionally, weakly nhibits voltage-gated sodium channels Nav1.7/SCN9A. High concentration of the toxin (3 uM) inhibits Nav1.7/SCN9A currents by 79%. The chain is Mu-Sparatoxin-Hp1 from Heteropoda pingtungensis (Pingtung huntsman spider).